The following is a 2664-amino-acid chain: Inositol 1,4,5-trisphosphate-gated calcium channel ITPR3 (2664 aa).

Residues 1 to 2227 (MSEMSSFLHI…YVEGASTGVL (2227 aa)) lie on the Cytoplasmic side of the membrane. 5 MIR domains span residues 113–173 (GDVV…LRSN), 174–224 (GDNV…INLF), 232–288 (EEVL…VEVV), 295–372 (GGAG…LDPT), and 378–434 (DSFV…IVSV). 1D-myo-inositol 1,4,5-trisphosphate is bound by residues Arg266, Thr268, Leu269, and Arg270. A disordered region spans residues 320-344 (NPSYKGDASDPKAAGTGAQGRTGRR). 6 residues coordinate 1D-myo-inositol 1,4,5-trisphosphate: Arg503, Lys507, Arg510, Tyr567, Arg568, and Lys569. Arg743 is a Ca(2+) binding site. 2 positions are modified to phosphoserine: Ser909 and Ser927. Glu1115 and Glu1118 together coordinate Ca(2+). 2 disordered regions span residues 1124 to 1158 (KGASKGEEGEAGPAKDKKERPTDEEGFLHPPGEKS) and 1790 to 1850 (QQET…VGER). Positions 1792-1805 (ETKSTVAVNMSDLG) are enriched in polar residues. Phosphoserine is present on residues Ser1806, Ser1825, and Ser1827. Glu1875 and Glu1939 together coordinate Ca(2+). 3 residues coordinate ATP: Ala1989, Glu2142, and Lys2145. The chain crosses the membrane as a helical span at residues 2228-2248 (GSPLISLLFWILICFSIAALF). Residues 2249–2256 (TKRYSVRP) are Extracellular-facing. The chain crosses the membrane as a helical span at residues 2257-2277 (LIVALILRSIYYLGIGPTLNI). Residues 2278–2286 (LGALNLTNK) lie on the Cytoplasmic side of the membrane. The chain crosses the membrane as a helical span at residues 2287-2304 (IVFVVSFVGNRGTFIRGY). The Extracellular segment spans residues 2305 to 2318 (KAMVMDMEFLYHVG). A helical transmembrane segment spans residues 2319–2339 (YILTSVLGLFAHELFYSILLF). Residues 2340–2361 (DLIYREETLFNVIKSVTRNGRS) lie on the Cytoplasmic side of the membrane. Residues 2362-2382 (ILLTALLALILVYLFSIVGFL) form a helical membrane-spanning segment. Topologically, residues 2383–2489 (FLKDDFILEV…ESLFPARVVY (107 aa)) are extracellular. Residues Cys2448 and Cys2454 are joined by a disulfide bond. Residues 2490 to 2510 (DLLFFFIVIIIVLNLIFGVII) traverse the membrane as a helical segment. Topologically, residues 2511–2664 (DTFADLRSEK…FVDVQNCMSR (154 aa)) are cytoplasmic. Positions 2531 and 2532 each coordinate ATP. Cys2531 lines the Zn(2+) pocket. Positions 2534 and 2551 each coordinate Zn(2+). Lys2553, His2556, Asn2557, and Met2558 together coordinate ATP. Residue His2556 coordinates Zn(2+). Ca(2+) is bound at residue Thr2574. Phosphoserine is present on residues Ser2602 and Ser2663.

Belongs to the InsP3 receptor family. In terms of assembly, homotetramer. Homodimer. Interacts with TRPC1, TRPC3 and TRPC4. Interacts with TRPV4. Interacts with SIGMAR1. Interacts with PML and AKT1. Interacts with IRAG2 (via coiled-coil domain). Interacts with CABP1. Interacts with TMBIM4/LFG4. Interacts with CEMIP. Interacts with TESPA1. Interacts with TMEM203. Interacts with BOK; regulates ITPR3 expression. Interacts with BCL2L10. Interacts with CHGA and CHGB. Post-translationally, phosphorylated by AKT1 on serine and/or threonine residues.

The protein localises to the endoplasmic reticulum membrane. It is found in the cytoplasmic vesicle. The protein resides in the secretory vesicle membrane. The enzyme catalyses Ca(2+)(in) = Ca(2+)(out). Inositol 1,4,5-trisphosphate-gated calcium channel is regulated by cytosolic calcium in a biphasic manner. At low concentrations, cytosolic calcium binds at a high-affinity juxtamembrane domain (JD) calcium binding site, allowing ITPR3 to activate by escaping a low-energy resting state through an ensemble of preactivated states. At high cytosolic calcium concentrations, ITPR3 preferentially enters an inhibited state stabilized by calcium binding at a second, low-affinity cytoplasmic domain (CD) calcium binding site. In terms of biological role, inositol 1,4,5-trisphosphate-gated calcium channel that, upon 1D-myo-inositol 1,4,5-trisphosphate binding, transports calcium from the endoplasmic reticulum lumen to cytoplasm, thus releasing the intracellular calcium and therefore participates in cellular calcium ion homeostasis. 1D-myo-inositol 1,4,5-trisphosphate binds to the ligand-free channel without altering its global conformation, yielding the low-energy resting state, then progresses through resting-to preactivated transitions to the higher energy preactivated state, which increases affinity for calcium, promoting binding of the low basal cytosolic calcium at the juxtamembrane domain (JD) site, favoring the transition through the ensemble of high-energy intermediate states along the trajectory to the fully-open activated state. Upon opening, releases calcium in the cytosol where it can bind to the low-affinity cytoplasmic domain (CD) site and stabilizes the inhibited state to terminate calcium release. The chain is Inositol 1,4,5-trisphosphate-gated calcium channel ITPR3 from Bos taurus (Bovine).